Reading from the N-terminus, the 152-residue chain is Putative NrdI-like protein (152 aa).

Belongs to the NrdI family.

The sequence is that of Putative NrdI-like protein from Streptococcus pyogenes serotype M18 (strain MGAS8232).